Reading from the N-terminus, the 715-residue chain is DNA ligase (715 aa).

NAD(+) contacts are provided by residues 47-51, 96-97, and glutamate 129; these read DADYD and SL. Lysine 131 functions as the N6-AMP-lysine intermediate in the catalytic mechanism. Arginine 152, glutamate 189, lysine 306, and lysine 330 together coordinate NAD(+). Cysteine 435, cysteine 438, cysteine 453, and cysteine 459 together coordinate Zn(2+). The BRCT domain occupies 637 to 715; it reads KRDSAVAGKT…EDEWLALIQG (79 aa).

It belongs to the NAD-dependent DNA ligase family. LigA subfamily. It depends on Mg(2+) as a cofactor. Mn(2+) serves as cofactor.

The enzyme catalyses NAD(+) + (deoxyribonucleotide)n-3'-hydroxyl + 5'-phospho-(deoxyribonucleotide)m = (deoxyribonucleotide)n+m + AMP + beta-nicotinamide D-nucleotide.. Its function is as follows. DNA ligase that catalyzes the formation of phosphodiester linkages between 5'-phosphoryl and 3'-hydroxyl groups in double-stranded DNA using NAD as a coenzyme and as the energy source for the reaction. It is essential for DNA replication and repair of damaged DNA. This chain is DNA ligase, found in Rhodopseudomonas palustris (strain BisA53).